The primary structure comprises 262 residues: 2-keto-4-pentenoate hydratase 2 (262 aa).

The protein belongs to the hydratase/decarboxylase family. MhpD subfamily. A divalent metal cation serves as cofactor.

It carries out the reaction (S)-4-hydroxy-2-oxopentanoate = (2Z)-2-hydroxypenta-2,4-dienoate + H2O. Its pathway is aromatic compound metabolism; 3-phenylpropanoate degradation. In terms of biological role, catalyzes the conversion of 2-hydroxypentadienoic acid (enolic form of 2-oxopent-4-enoate) to 4-hydroxy-2-ketopentanoic acid. This chain is 2-keto-4-pentenoate hydratase 2, found in Dechloromonas aromatica (strain RCB).